The sequence spans 309 residues: Ribosomal RNA small subunit methyltransferase H (309 aa).

S-adenosyl-L-methionine contacts are provided by residues 44–46 (GGH), Asp62, Phe102, Asp118, and Gln125. Positions 289–309 (LEQQRNSRARSAKLRVAARSS) are disordered.

The protein belongs to the methyltransferase superfamily. RsmH family.

The protein localises to the cytoplasm. It catalyses the reaction cytidine(1402) in 16S rRNA + S-adenosyl-L-methionine = N(4)-methylcytidine(1402) in 16S rRNA + S-adenosyl-L-homocysteine + H(+). In terms of biological role, specifically methylates the N4 position of cytidine in position 1402 (C1402) of 16S rRNA. This chain is Ribosomal RNA small subunit methyltransferase H, found in Synechococcus sp. (strain JA-3-3Ab) (Cyanobacteria bacterium Yellowstone A-Prime).